A 339-amino-acid polypeptide reads, in one-letter code: Ribosomal RNA small subunit methyltransferase C (339 aa).

It belongs to the methyltransferase superfamily. RsmC family. As to quaternary structure, monomer.

Its subcellular location is the cytoplasm. The catalysed reaction is guanosine(1207) in 16S rRNA + S-adenosyl-L-methionine = N(2)-methylguanosine(1207) in 16S rRNA + S-adenosyl-L-homocysteine + H(+). Functionally, specifically methylates the guanine in position 1207 of 16S rRNA in the 30S particle. The sequence is that of Ribosomal RNA small subunit methyltransferase C from Photobacterium profundum (strain SS9).